Here is a 90-residue protein sequence, read N- to C-terminus: Histone H1.M6.2 (90 aa).

Positions Met1–Lys90 are disordered. Residues Ala11–Lys90 show a composition bias toward basic residues.

Its subcellular location is the nucleus. The protein localises to the chromosome. The polypeptide is Histone H1.M6.2 (Trypanosoma cruzi).